The sequence spans 1056 residues: E3 SUMO-protein ligase ZNF451 (1056 aa).

The interval 1-39 (MGDPGPEIIESVPPAGPEASESTTDENEDDIQFVSEGPL) is disordered. The interval 1-246 (MGDPGPEIIE…AADGHSNSLL (246 aa)) is sufficient for E3 SUMO-protein ligase activity. The important for interaction with SUMO1 and SUMO2 stretch occupies residues 1-344 (MGDPGPEIIE…RVRCQNAGPV (344 aa)). The segment at 30–37 (DIQFVSEG) is interaction with SUMO2 1. Positions 38-41 (PLRP) match the PLRP motif. An interaction with SUMO2 2 region spans residues 42–50 (VLEYIDLVS). Glycyl lysine isopeptide (Lys-Gly) (interchain with G-Cter in SUMO2) cross-links involve residues K75, K77, K106, K139, and K153. At S155 the chain carries Phosphoserine. R158 is modified (omega-N-methylarginine). K167 participates in a covalent cross-link: Glycyl lysine isopeptide (Lys-Gly) (interchain with G-Cter in SUMO2). The tract at residues 168–521 (PILCPIMHCN…HMSRFHGGAH (354 aa)) is important for interaction with SMAD4. The segment at 169 to 195 (ILCPIMHCNKEFDNGHLLLGHLKRFDH) adopts a C2H2-type 1 zinc-finger fold. Residues 212 to 234 (FACAVCYEHFVTQQQYKDHLLSR) form a C2H2-type 2; degenerate zinc finger. The segment at 253 to 277 (YACPQCFLLFSTKDECLKHMSTKNH) adopts a C2H2-type 3 zinc-finger fold. Residues K270, K275, K283, K288, K301, and K309 each participate in a glycyl lysine isopeptide (Lys-Gly) (interchain with G-Cter in SUMO2) cross-link. Residues 315 to 338 (VKCVACHQTLRSHMELTAHFRVRC) form a C2H2-type 4; atypical zinc finger. Residues 362–385 (GYCSDCNQVFMDVASTQSHKNSGH) form a C2H2-type 5 zinc finger. Residue K420 forms a Glycyl lysine isopeptide (Lys-Gly) (interchain with G-Cter in SUMO2) linkage. S429 is modified (phosphoserine). A Glycyl lysine isopeptide (Lys-Gly) (interchain with G-Cter in SUMO2) cross-link involves residue K431. 2 C2H2-type zinc fingers span residues 494-517 (YKCV…SRFH) and 527-550 (FWCR…TEFH). Residues K539 and K583 each participate in a glycyl lysine isopeptide (Lys-Gly) (interchain with G-Cter in SUMO2) cross-link. The C2H2-type 8; atypical zinc finger occupies 604 to 629 (WQCRICEDMFESQECVKQHCMSLTSH). 2 C2H2-type zinc fingers span residues 634-657 (YSCA…QDEH) and 665-688 (YFCG…KEHH). K645 is covalently cross-linked (Glycyl lysine isopeptide (Lys-Gly) (interchain with G-Cter in SUMO2)). K704 participates in a covalent cross-link: Glycyl lysine isopeptide (Lys-Gly) (interchain with G-Cter in SUMO1); alternate. K704 is covalently cross-linked (Glycyl lysine isopeptide (Lys-Gly) (interchain with G-Cter in SUMO2); alternate). Glycyl lysine isopeptide (Lys-Gly) (interchain with G-Cter in SUMO2) cross-links involve residues K729 and K746. C2H2-type zinc fingers lie at residues 751-774 (FRCS…CQVH) and 787-810 (IKCG…HRKH). Glycyl lysine isopeptide (Lys-Gly) (interchain with G-Cter in SUMO2) cross-links involve residues K788, K815, K843, K849, K947, K988, and K989. Disordered stretches follow at residues 806-830 (FHRK…STCQ) and 839-858 (EKNL…KGAE). Basic and acidic residues predominate over residues 849–858 (KHSDVEKGAE). The tract at residues 1019-1045 (KECDSDDSSGMKGSPAEELRATEDVEL) is disordered. The segment covering 1033-1045 (PAEELRATEDVEL) has biased composition (basic and acidic residues). The segment at 1045 to 1056 (LEEAIRRSLEEM) is important for ubiquitin binding.

The protein belongs to the krueppel C2H2-type zinc-finger protein family. As to quaternary structure, homooligomer. Interacts (via N-terminal region) with SUMO1. Interacts (via N-terminal region) with SUMO2. Interacts simultaneously with two SUMO2 chains. Identified in a complex with SUMO2 and UBE2I/UBC9, where one ZNF451 interacts with one UBE2I/UBC9 and two SUMO2 chains, one bound to the UBE2I/UBC9 active site and the other to another region of the same UBE2I/UBC9 molecule. Interacts (via C-terminus) with ubiquitin. Interacts (via N-terminal zinc-finger domains) with SMAD4 (via MH2 domain). Interacts with SMAD2 and SMAD3. Identified in a complex that contains at least ZNF451, SMAD2, SMAD3 and SMAD4. Interacts with EP300. Inhibits interaction between EP300 and the SMAD4 complex. Interacts with SIMC1. In terms of processing, sumoylated. Predominantly sumoylated on the N-terminal region that is important for interaction with SUMO1 and SUMO2. Sumoylation is important for localization in nuclear granules; desumoylation leads to diffuse nucleoplasmic location. Autosumoylated (in vitro). Sumoylation enhances E3 SUMO-protein ligase activity.

The protein resides in the nucleus. Its subcellular location is the PML body. It is found in the nucleoplasm. Its pathway is protein modification; protein sumoylation. Functionally, E3 SUMO-protein ligase; has a preference for SUMO2 and SUMO3 and facilitates UBE2I/UBC9-mediated sumoylation of target proteins. Plays a role in protein SUMO2 modification in response to stress caused by DNA damage and by proteasome inhibitors (in vitro). Required for MCM4 sumoylation. Has no activity with SUMO1. Preferentially transfers an additional SUMO2 chain onto the SUMO2 consensus site 'Lys-11'. Negatively regulates transcriptional activation mediated by the SMAD4 complex in response to TGF-beta signaling. Inhibits EP300-mediated acetylation of histone H3 at 'Lys-9'. Plays a role in regulating the transcription of AR targets. The polypeptide is E3 SUMO-protein ligase ZNF451 (Znf451) (Mus musculus (Mouse)).